Reading from the N-terminus, the 189-residue chain is Peptidyl-tRNA hydrolase (189 aa).

A tRNA-binding site is contributed by Tyr-14. Catalysis depends on His-19, which acts as the Proton acceptor. Tyr-64, Asn-66, and Asn-112 together coordinate tRNA.

The protein belongs to the PTH family. In terms of assembly, monomer.

The protein resides in the cytoplasm. The catalysed reaction is an N-acyl-L-alpha-aminoacyl-tRNA + H2O = an N-acyl-L-amino acid + a tRNA + H(+). Its function is as follows. Hydrolyzes ribosome-free peptidyl-tRNAs (with 1 or more amino acids incorporated), which drop off the ribosome during protein synthesis, or as a result of ribosome stalling. Catalyzes the release of premature peptidyl moieties from peptidyl-tRNA molecules trapped in stalled 50S ribosomal subunits, and thus maintains levels of free tRNAs and 50S ribosomes. The chain is Peptidyl-tRNA hydrolase from Clostridium botulinum (strain 657 / Type Ba4).